The sequence spans 147 residues: Hemoglobin subunit beta-2 (147 aa).

At V2 the chain carries N-acetylvaline. Residues 3–147 (HLTDAEKSAV…VATALAHKYH (145 aa)) form the Globin domain. At K18 the chain carries N6-succinyllysine. Phosphotyrosine is present on Y42. A phosphoserine mark is found at S45, S51, and S53. K60 carries the post-translational modification N6-succinyllysine. Heme b is bound by residues H64 and H93. R105 bears the Asymmetric dimethylarginine mark. Phosphothreonine is present on T124.

Belongs to the globin family. As to quaternary structure, heterotetramer of two alpha chains and two beta chains. As to expression, red blood cells.

Its function is as follows. Involved in oxygen transport from the lung to the various peripheral tissues. The chain is Hemoglobin subunit beta-2 (Hbb-b2) from Mus musculus (Mouse).